The following is a 154-amino-acid chain: uncharacterized protein (154 aa).

This is an uncharacterized protein from Archaeoglobus fulgidus (strain ATCC 49558 / DSM 4304 / JCM 9628 / NBRC 100126 / VC-16).